The primary structure comprises 83 residues: Exodeoxyribonuclease 7 small subunit (83 aa).

The protein belongs to the XseB family. In terms of assembly, heterooligomer composed of large and small subunits.

It is found in the cytoplasm. It carries out the reaction Exonucleolytic cleavage in either 5'- to 3'- or 3'- to 5'-direction to yield nucleoside 5'-phosphates.. Its function is as follows. Bidirectionally degrades single-stranded DNA into large acid-insoluble oligonucleotides, which are then degraded further into small acid-soluble oligonucleotides. This is Exodeoxyribonuclease 7 small subunit from Allorhizobium ampelinum (strain ATCC BAA-846 / DSM 112012 / S4) (Agrobacterium vitis (strain S4)).